Consider the following 396-residue polypeptide: Microcin B17-processing protein McbD (396 aa).

The 356-residue stretch at 41 to 396 folds into the YcaO domain; the sequence is ASAAGETLKS…VRESKMVPFP (356 aa).

The protein localises to the cytoplasm. Necessary to process the inactive microcin B17 (McbA) precursor into the active peptide. This chain is Microcin B17-processing protein McbD (mcbD), found in Escherichia coli.